A 119-amino-acid chain; its full sequence is Beta-2-microglobulin (119 aa).

The N-terminal stretch at 1–20 (MSPSVALAVLALLSLSGLEA) is a signal peptide. The 90-residue stretch at 25-114 (PKIQVYSRHP…VTLSGPRTVK (90 aa)) folds into the Ig-like C1-type domain. A disulfide bridge links Cys-45 with Cys-100.

The protein belongs to the beta-2-microglobulin family. As to quaternary structure, heterodimer of an alpha chain and a beta chain. Beta-2-microglobulin is the beta-chain of major histocompatibility complex class I molecules.

The protein localises to the secreted. Component of the class I major histocompatibility complex (MHC). Involved in the presentation of peptide antigens to the immune system. The sequence is that of Beta-2-microglobulin (B2M) from Macaca fascicularis (Crab-eating macaque).